A 351-amino-acid polypeptide reads, in one-letter code: Carbamoyl phosphate synthase small chain (351 aa).

Residues 1–171 (MKGIIYLEDG…IIHIAGNGNK (171 aa)) form a CPSase region. L-glutamine contacts are provided by Ser45, Gly219, and Gly221. The Glutamine amidotransferase type-1 domain maps to 171-351 (KVAVMDFGIK…TYLFDQFVNL (181 aa)). The active-site Nucleophile is the Cys246. Leu247, Gln250, Asn288, Gly290, and Tyr291 together coordinate L-glutamine. Catalysis depends on residues His331 and Glu333.

The protein belongs to the CarA family. Composed of two chains; the small (or glutamine) chain promotes the hydrolysis of glutamine to ammonia, which is used by the large (or ammonia) chain to synthesize carbamoyl phosphate. Tetramer of heterodimers (alpha,beta)4.

The catalysed reaction is hydrogencarbonate + L-glutamine + 2 ATP + H2O = carbamoyl phosphate + L-glutamate + 2 ADP + phosphate + 2 H(+). It catalyses the reaction L-glutamine + H2O = L-glutamate + NH4(+). It functions in the pathway amino-acid biosynthesis; L-arginine biosynthesis; carbamoyl phosphate from bicarbonate: step 1/1. It participates in pyrimidine metabolism; UMP biosynthesis via de novo pathway; (S)-dihydroorotate from bicarbonate: step 1/3. Its function is as follows. Small subunit of the glutamine-dependent carbamoyl phosphate synthetase (CPSase). CPSase catalyzes the formation of carbamoyl phosphate from the ammonia moiety of glutamine, carbonate, and phosphate donated by ATP, constituting the first step of 2 biosynthetic pathways, one leading to arginine and/or urea and the other to pyrimidine nucleotides. The small subunit (glutamine amidotransferase) binds and cleaves glutamine to supply the large subunit with the substrate ammonia. The polypeptide is Carbamoyl phosphate synthase small chain (Clostridium acetobutylicum (strain ATCC 824 / DSM 792 / JCM 1419 / IAM 19013 / LMG 5710 / NBRC 13948 / NRRL B-527 / VKM B-1787 / 2291 / W)).